The primary structure comprises 520 residues: MKGALLVAGTTSDAGKSVVVAGLCRMLARRGVRVAPFKAQNMSNNSVVTLDGGEIGRAQALQARACGLEPSVRFNPVLLKPGSDRRSQLVVRGQAVDTVGAADYFRHRTALREVVAAELASLRAEFDVVLCEGAGSPAEINLRATDLANMGLARAADLPVLVVGDIDRGGVLAHLFGTVAVLEPDDQRLIAGFVVNKFRGDVDLLRPGLDRLAELTGRPTLGVLPFAEELWLDAEDSLGTVADAPVGRPRPPVGTEWLTVAAVRLPRISNSTDVEALACEPGVAVRWVSEPSRLADADLVVVPGSKSTVSDLAWLRRTGLGEALRARVTAGRPVLAICGGYQMLGRRIVDEVESGAGEVAGLGVFDLETEFAAPKVLRRVTGMGAGNPVRGYEIHHGRVRRSGDAPWLGLVDAPEAAVDGGEDAVPLTPEGSVTGGAWGTHVHGLLESDGFRRAWLREVAARAGRHGFQVAPDTSVAAVRAGQLDLLADLVEKHLDQDALERILTDGAPTGLPVLTVGQA.

Positions tryptophan 257 to phenylalanine 451 constitute a GATase cobBQ-type domain. The Nucleophile role is filled by cysteine 338. Residue histidine 443 is part of the active site.

It belongs to the CobB/CobQ family. CobQ subfamily.

It participates in cofactor biosynthesis; adenosylcobalamin biosynthesis. Catalyzes amidations at positions B, D, E, and G on adenosylcobyrinic A,C-diamide. NH(2) groups are provided by glutamine, and one molecule of ATP is hydrogenolyzed for each amidation. The sequence is that of Cobyric acid synthase from Nocardia farcinica (strain IFM 10152).